Reading from the N-terminus, the 444-residue chain is Retinoic acid receptor alpha-A (444 aa).

The interval 1–71 (MYESVDVNPF…PPSPPPPPRI (71 aa)) is modulating. A compositionally biased stretch (polar residues) spans 35-46 (SIRHQHWSGSNH). The interval 35–67 (SIRHQHWSGSNHSIETQSTSSEEIVPSPPSPPP) is disordered. Positions 47–58 (SIETQSTSSEEI) are enriched in low complexity. The segment at residues 72–147 (YKPCFVCQDK…VGMSKESVRN (76 aa)) is a DNA-binding region (nuclear receptor). 2 consecutive NR C4-type zinc fingers follow at residues 75–95 (CFVCQDKSSGYHYGVSACEGC) and 111–130 (CHREKNCIINKVTRNRCQYC). The tract at residues 148 to 169 (DRNKKKKEEKKPECTENYTLSP) is hinge. Residues 170 to 404 (DTEQMIDRVR…PLIQEMLENS (235 aa)) form the NR LBD domain. Positions 395–403 (PLIQEMLEN) match the 9aaTAD motif. Positions 402 to 444 (ENSEGLESSSGAQGSRASATTPGSCSPSLSPNSAQSSPPTQSP) are disordered.

This sequence belongs to the nuclear hormone receptor family. NR1 subfamily. In terms of assembly, heterodimer; with an rxr molecule. Binds DNA preferentially as a rar/rxr heterodimer. In the embryo, zygotic expression largely overlaps that of rarab, with high levels in hindbrain, lateral mesoderm and tail bud. In the adult, strong expression in brain and muscle, weaker expression in ovary, liver and digestive tract.

The protein resides in the nucleus. In terms of biological role, receptor for retinoic acid. Retinoic acid receptors bind as heterodimers to their target response elements in response to their ligands, all-trans or 9-cis retinoic acid, and regulate gene expression in various biological processes. The rar/rxr heterodimers bind to the retinoic acid response elements (RARE) composed of tandem 5'-AGGTCA-3' sites known as DR1-DR5. Required for hindbrain patterning. This is Retinoic acid receptor alpha-A from Danio rerio (Zebrafish).